A 291-amino-acid chain; its full sequence is ATP synthase subunit a (291 aa).

The next 6 helical transmembrane spans lie at 51-71, 117-137, 146-166, 173-193, 213-233, and 239-259; these read FSFT…LLLV, FFPC…QGMI, HFLI…IVGF, FLSF…LVLL, MMAG…MLCM, and FIGD…ELGV.

It belongs to the ATPase A chain family. As to quaternary structure, F-type ATPases have 2 components, CF(1) - the catalytic core - and CF(0) - the membrane proton channel. CF(1) has five subunits: alpha(3), beta(3), gamma(1), delta(1), epsilon(1). CF(0) has three main subunits: a, b and c.

It localises to the mitochondrion inner membrane. Its function is as follows. Mitochondrial membrane ATP synthase (F(1)F(0) ATP synthase or Complex V) produces ATP from ADP in the presence of a proton gradient across the membrane which is generated by electron transport complexes of the respiratory chain. F-type ATPases consist of two structural domains, F(1) - containing the extramembraneous catalytic core and F(0) - containing the membrane proton channel, linked together by a central stalk and a peripheral stalk. During catalysis, ATP synthesis in the catalytic domain of F(1) is coupled via a rotary mechanism of the central stalk subunits to proton translocation. Key component of the proton channel; it may play a direct role in the translocation of protons across the membrane. The sequence is that of ATP synthase subunit a (ATP6) from Vicia faba (Broad bean).